The sequence spans 352 residues: Holliday junction branch migration complex subunit RuvB (352 aa).

Positions 1–42 are disordered; the sequence is MAIVSSSAGRADSQPPAAKSRVVDASPLPEEASPAREDGLRP. The large ATPase domain (RuvB-L) stretch occupies residues 13–201; that stretch reads SQPPAAKSRV…FGLIQRLEFY (189 aa). A compositionally biased stretch (basic and acidic residues) spans 33 to 42; sequence SPAREDGLRP. Positions 40, 41, 82, 85, 86, 87, 191, 201, and 238 each coordinate ATP. Position 86 (Thr-86) interacts with Mg(2+). The segment at 202–273 is small ATPAse domain (RuvB-S); the sequence is GLEDLQAIVE…LVDEALTLHR (72 aa). Residues 276 to 352 form a head domain (RuvB-H) region; that stretch reads ARGLDASDRR…RRHLGWPELP (77 aa). The DNA site is built by Arg-331 and Arg-336.

Belongs to the RuvB family. As to quaternary structure, homohexamer. Forms an RuvA(8)-RuvB(12)-Holliday junction (HJ) complex. HJ DNA is sandwiched between 2 RuvA tetramers; dsDNA enters through RuvA and exits via RuvB. An RuvB hexamer assembles on each DNA strand where it exits the tetramer. Each RuvB hexamer is contacted by two RuvA subunits (via domain III) on 2 adjacent RuvB subunits; this complex drives branch migration. In the full resolvosome a probable DNA-RuvA(4)-RuvB(12)-RuvC(2) complex forms which resolves the HJ.

Its subcellular location is the cytoplasm. It catalyses the reaction ATP + H2O = ADP + phosphate + H(+). In terms of biological role, the RuvA-RuvB-RuvC complex processes Holliday junction (HJ) DNA during genetic recombination and DNA repair, while the RuvA-RuvB complex plays an important role in the rescue of blocked DNA replication forks via replication fork reversal (RFR). RuvA specifically binds to HJ cruciform DNA, conferring on it an open structure. The RuvB hexamer acts as an ATP-dependent pump, pulling dsDNA into and through the RuvAB complex. RuvB forms 2 homohexamers on either side of HJ DNA bound by 1 or 2 RuvA tetramers; 4 subunits per hexamer contact DNA at a time. Coordinated motions by a converter formed by DNA-disengaged RuvB subunits stimulates ATP hydrolysis and nucleotide exchange. Immobilization of the converter enables RuvB to convert the ATP-contained energy into a lever motion, pulling 2 nucleotides of DNA out of the RuvA tetramer per ATP hydrolyzed, thus driving DNA branch migration. The RuvB motors rotate together with the DNA substrate, which together with the progressing nucleotide cycle form the mechanistic basis for DNA recombination by continuous HJ branch migration. Branch migration allows RuvC to scan DNA until it finds its consensus sequence, where it cleaves and resolves cruciform DNA. The chain is Holliday junction branch migration complex subunit RuvB from Prochlorococcus marinus (strain MIT 9303).